The sequence spans 87 residues: Protein anon-73B1 (87 aa).

The helical transmembrane segment at 25–47 (LLIRYGLYVGALFQFVCISAAVL) threads the bilayer. A disordered region spans residues 51-87 (NPDGQSNPESGEVTEREGEPVRTRLHKIRKLEKKKRR). Residues 63–72 (VTEREGEPVR) show a composition bias toward basic and acidic residues. Positions 73 to 87 (TRLHKIRKLEKKKRR) are enriched in basic residues.

It belongs to the UPF0239 family.

The protein localises to the membrane. The protein is Protein anon-73B1 (anon-73B1) of Drosophila melanogaster (Fruit fly).